The sequence spans 410 residues: DNA replication and repair protein RecF (410 aa).

Gly-30 to Thr-37 is a binding site for ATP.

The protein belongs to the RecF family.

The protein resides in the cytoplasm. The RecF protein is involved in DNA metabolism; it is required for DNA replication and normal SOS inducibility. RecF binds preferentially to single-stranded, linear DNA. It also seems to bind ATP. The chain is DNA replication and repair protein RecF from Rhodococcus jostii (strain RHA1).